The following is a 252-amino-acid chain: 2-succinyl-6-hydroxy-2,4-cyclohexadiene-1-carboxylate synthase (252 aa).

This sequence belongs to the AB hydrolase superfamily. MenH family. In terms of assembly, monomer.

The enzyme catalyses 5-enolpyruvoyl-6-hydroxy-2-succinyl-cyclohex-3-ene-1-carboxylate = (1R,6R)-6-hydroxy-2-succinyl-cyclohexa-2,4-diene-1-carboxylate + pyruvate. It participates in quinol/quinone metabolism; 1,4-dihydroxy-2-naphthoate biosynthesis; 1,4-dihydroxy-2-naphthoate from chorismate: step 3/7. Its pathway is quinol/quinone metabolism; menaquinone biosynthesis. Catalyzes a proton abstraction reaction that results in 2,5-elimination of pyruvate from 2-succinyl-5-enolpyruvyl-6-hydroxy-3-cyclohexene-1-carboxylate (SEPHCHC) and the formation of 2-succinyl-6-hydroxy-2,4-cyclohexadiene-1-carboxylate (SHCHC). This Salmonella agona (strain SL483) protein is 2-succinyl-6-hydroxy-2,4-cyclohexadiene-1-carboxylate synthase.